A 687-amino-acid polypeptide reads, in one-letter code: Geranylgeranyl transferase type-2 subunit alpha 2 (687 aa).

PFTA repeat units follow at residues 38 to 72, 83 to 117, 132 to 167, 168 to 203, and 214 to 248; these read YTKE…SRLD, IIDE…KKGH, YQKQ…LTKT, SEED…SLVA, and TIRR…QTVK. LRR repeat units follow at residues 523-545, 546-567, 568-591, 592-616, and 646-668; these read MNNI…VEKL, LFVQ…LEAM, QLLC…SLRH, LKQL…TTRY, and LMKL…EFSS.

The protein belongs to the protein prenyltransferase subunit alpha family. Heterotrimer composed of the alpha subunit RGTA, the beta subunit RGTB and REP; within this trimer, RGTA and RGTB form the catalytic component, while REP mediates peptide substrate binding.

It catalyses the reaction geranylgeranyl diphosphate + L-cysteinyl-[protein] = S-geranylgeranyl-L-cysteinyl-[protein] + diphosphate. With respect to regulation, the enzymatic reaction requires the aid of the Rab escort protein REP. Functionally, catalyzes the transfer of a geranylgeranyl moiety from geranylgeranyl diphosphate to both cysteines of Rab proteins with the C-terminal sequence -CCXX, CXXX, -XCCX and -XCXC, such as RABA1A, RABA2A, RABF2A and RABG2. Does not seem to be a functional Rab-GGT alpha subunit in vitro. The protein is Geranylgeranyl transferase type-2 subunit alpha 2 of Arabidopsis thaliana (Mouse-ear cress).